Consider the following 304-residue polypeptide: Large ribosomal subunit protein uL18 (304 aa).

The segment at leucine 285–glutamate 304 is disordered. Acidic residues predominate over residues alanine 294–glutamate 304.

Belongs to the universal ribosomal protein uL18 family. In terms of assembly, component of the large ribosomal subunit (LSU).

It is found in the cytoplasm. Its subcellular location is the nucleus. In terms of biological role, component of the ribosome, a large ribonucleoprotein complex responsible for the synthesis of proteins in the cell. The small ribosomal subunit (SSU) binds messenger RNAs (mRNAs) and translates the encoded message by selecting cognate aminoacyl-transfer RNA (tRNA) molecules. The large subunit (LSU) contains the ribosomal catalytic site termed the peptidyl transferase center (PTC), which catalyzes the formation of peptide bonds, thereby polymerizing the amino acids delivered by tRNAs into a polypeptide chain. The nascent polypeptides leave the ribosome through a tunnel in the LSU and interact with protein factors that function in enzymatic processing, targeting, and the membrane insertion of nascent chains at the exit of the ribosomal tunnel. The protein is Large ribosomal subunit protein uL18 (RPL5A) of Oryza sativa subsp. indica (Rice).